Consider the following 485-residue polypeptide: 1-aminocyclopropane-1-carboxylate synthase 2 (485 aa).

Glu55 and Tyr92 together coordinate substrate. Residue Lys278 is modified to N6-(pyridoxal phosphate)lysine. Ser460 carries the phosphoserine modification.

The protein belongs to the class-I pyridoxal-phosphate-dependent aminotransferase family. As to quaternary structure, homodimer and heterodimer. In vivo, the relevance of heterodimerization with other ACS enzymes is however unsure. The cofactor is pyridoxal 5'-phosphate. Phosphorylated on Ser 460; phosphorylation may regulate its turnover. In terms of processing, may be processed at its C-terminus.

The catalysed reaction is S-adenosyl-L-methionine = 1-aminocyclopropane-1-carboxylate + S-methyl-5'-thioadenosine + H(+). It functions in the pathway alkene biosynthesis; ethylene biosynthesis via S-adenosyl-L-methionine; ethylene from S-adenosyl-L-methionine: step 1/2. 1-aminocyclopropane-1-carboxylate synthase (ACS) enzymes catalyze the conversion of S-adenosyl-L-methionine (SAM) into 1-aminocyclopropane-1-carboxylate (ACC), a direct precursor of ethylene. In Solanum lycopersicum (Tomato), this protein is 1-aminocyclopropane-1-carboxylate synthase 2 (ACS2).